A 290-amino-acid polypeptide reads, in one-letter code: Protease HtpX (290 aa).

A run of 2 helical transmembrane segments spans residues 6-26 (LFLV…NILF) and 36-56 (ISGL…ISLL). H143 provides a ligand contact to Zn(2+). E144 is an active-site residue. Residue H147 participates in Zn(2+) binding. Transmembrane regions (helical) follow at residues 158–178 (LIQG…AGVI) and 200–220 (ITVF…VMWF). Residue E225 participates in Zn(2+) binding.

This sequence belongs to the peptidase M48B family. Requires Zn(2+) as cofactor.

It localises to the cell inner membrane. The sequence is that of Protease HtpX from Aeromonas salmonicida (strain A449).